We begin with the raw amino-acid sequence, 218 residues long: Adenylate kinase (218 aa).

Residue 10 to 15 (GAGKGT) participates in ATP binding. Residues 30–59 (STGDMLRAAVQAQTPVGIEAKKVMDAGKLV) form an NMP region. AMP-binding positions include Thr-31, Arg-36, 57 to 59 (KLV), 85 to 88 (GFPR), and Gln-92. The segment at 122 to 159 (GRRVHLSSGRTYHVRFNPPKKEGLDDLTGEPLVQREDD) is LID. ATP contacts are provided by residues Arg-123 and 132–133 (TY). AMP is bound by residues Arg-156 and Arg-167. An ATP-binding site is contributed by Gly-203.

It belongs to the adenylate kinase family. In terms of assembly, monomer.

It localises to the cytoplasm. It carries out the reaction AMP + ATP = 2 ADP. Its pathway is purine metabolism; AMP biosynthesis via salvage pathway; AMP from ADP: step 1/1. Catalyzes the reversible transfer of the terminal phosphate group between ATP and AMP. Plays an important role in cellular energy homeostasis and in adenine nucleotide metabolism. The polypeptide is Adenylate kinase (Chlorobium phaeobacteroides (strain DSM 266 / SMG 266 / 2430)).